Consider the following 423-residue polypeptide: Protein MANNAN SYNTHESIS-RELATED 2 (423 aa).

Topologically, residues 1–6 (MGVDLR) are cytoplasmic. The helical; Signal-anchor for type II membrane protein transmembrane segment at 7 to 26 (QVVAGILTITMFVMLGQMLH) threads the bilayer. The Lumenal portion of the chain corresponds to 27–423 (RDYFDAVQEK…KNHLAYSCFC (397 aa)). 264 to 266 (DLR) contributes to the substrate binding site.

Belongs to the glycosyltransferase GT106 family. Widely expressed.

The protein resides in the golgi apparatus membrane. The protein operates within glycan biosynthesis. Functionally, glycosyltransferase involved in mannan biosynthesis. The sequence is that of Protein MANNAN SYNTHESIS-RELATED 2 from Arabidopsis thaliana (Mouse-ear cress).